The sequence spans 358 residues: E3 ubiquitin-protein ligase SIS3 (358 aa).

Residues 1-27 (MAMRGVDFKWYDGFFLSMLATSVIIVA) form the signal peptide. Transmembrane regions (helical) follow at residues 40 to 60 (LHIWIVVDYTTVFIFRVFMFV), 85 to 105 (VVVLSVLSLLLYPFLWAWTVI), and 125 to 145 (GFLIWLMFSYCGLLCIAFICV). An RING-type; atypical zinc finger spans residues 235-276 (CLICLEEFHIGHEVRGLPCAHNFHVECIDQWLRLNVKCPRCR). Residues 336–358 (TALETAENGGVPPVLTDLSPSRR) are disordered.

Expressed in roots, stems, leaves, flowers and siliques.

It localises to the membrane. It catalyses the reaction S-ubiquitinyl-[E2 ubiquitin-conjugating enzyme]-L-cysteine + [acceptor protein]-L-lysine = [E2 ubiquitin-conjugating enzyme]-L-cysteine + N(6)-ubiquitinyl-[acceptor protein]-L-lysine.. Its pathway is protein modification; protein ubiquitination. Its function is as follows. E3 ubiquitin protein ligase that acts as a positive regulator of sugar signaling during early seedling development. Possesses E3 ligase activity in vitro. This Arabidopsis thaliana (Mouse-ear cress) protein is E3 ubiquitin-protein ligase SIS3 (SIS3).